The chain runs to 60 residues: Conotoxin Pu5.6 (60 aa).

The N-terminal stretch at 1-19 (MRCVPVFVILLLLIASAAS) is a signal peptide. Residues 20–47 (IDAQQKTKDDAPLTSLNDNALQQHWNKR) constitute a propeptide that is removed on maturation.

Belongs to the conotoxin T superfamily. Contains 2 disulfide bonds that can be either 'C1-C3, C2-C4' or 'C1-C4, C2-C3', since these disulfide connectivities have been observed for conotoxins with cysteine framework V (for examples, see AC P0DQQ7 and AC P81755). As to expression, expressed by the venom duct.

The protein resides in the secreted. The protein is Conotoxin Pu5.6 of Conus pulicarius (Flea-bitten cone).